The following is a 389-amino-acid chain: P2X purinoceptor 4a (389 aa).

Topologically, residues 1-36 (MSESVGCCDSVSQCFFDYYTSKILIIRSKKVGTLNR) are cytoplasmic. Residues 37 to 57 (FTQALVIAYVIGYVCVYNKGY) form a helical membrane-spanning segment. At 58–343 (QDTDTVLSSV…NIIPTLLNMG (286 aa)) the chain is on the extracellular side. ATP is bound by residues Lys70 and Lys72. Residues Lys70 and Lys72 each contribute to the CTP site. N-linked (GlcNAc...) asparagine glycans are attached at residues Asn78 and Asn113. 3 cysteine pairs are disulfide-bonded: Cys119–Cys168, Cys129–Cys152, and Cys135–Cys162. Arg143 provides a ligand contact to CTP. An N-linked (GlcNAc...) asparagine glycan is attached at Asn187. ATP-binding residues include Thr189 and Leu191. CTP is bound at residue Thr189. N-linked (GlcNAc...) asparagine glycosylation occurs at Asn213. Disulfide bonds link Cys220/Cys230 and Cys264/Cys273. ATP-binding residues include Asn296, Arg298, and Lys316. Asn296, Arg298, and Lys316 together coordinate CTP. The chain crosses the membrane as a helical span at residues 344 to 364 (AGLALLGLVNVICDWIVLTFM). At 365–389 (KRKQHYKEQKYTYVDDFGLLHNEDK) the chain is on the cytoplasmic side.

Belongs to the P2X receptor family. In terms of assembly, functional P2XRs are organized as homomeric and heteromeric trimers. Forms homotrimer.

The protein localises to the cell membrane. The protein resides in the lysosome membrane. The catalysed reaction is K(+)(in) = K(+)(out). It catalyses the reaction Na(+)(in) = Na(+)(out). It carries out the reaction Ca(2+)(in) = Ca(2+)(out). With respect to regulation, activated by ATP. pH-dependent and inhibited by acidic pH. Functionally, ATP-gated nonselective transmembrane cation channel permeable to potassium, sodium and calcium. CTP, but not GTP or UTP, functions as a weak affinity agonist for P2RX4. Activated by extracellularly released ATP, it plays multiple role in immunity and central nervous system physiology. Could also function as an ATP-gated cation channel of lysosomal membranes. The sequence is that of P2X purinoceptor 4a (p2rx4a) from Danio rerio (Zebrafish).